Consider the following 156-residue polypeptide: Phosphopantetheine adenylyltransferase (156 aa).

Residue S9 participates in substrate binding. ATP is bound by residues 9–10 (SF) and H17. Positions 41, 74, and 88 each coordinate substrate. ATP is bound by residues 89-91 (GLR), E99, and 123-129 (LLHVSSS).

It belongs to the bacterial CoaD family. As to quaternary structure, homohexamer. Mg(2+) serves as cofactor.

Its subcellular location is the cytoplasm. It catalyses the reaction (R)-4'-phosphopantetheine + ATP + H(+) = 3'-dephospho-CoA + diphosphate. It participates in cofactor biosynthesis; coenzyme A biosynthesis; CoA from (R)-pantothenate: step 4/5. In terms of biological role, reversibly transfers an adenylyl group from ATP to 4'-phosphopantetheine, yielding dephospho-CoA (dPCoA) and pyrophosphate. This Kocuria rhizophila (strain ATCC 9341 / DSM 348 / NBRC 103217 / DC2201) protein is Phosphopantetheine adenylyltransferase.